Reading from the N-terminus, the 96-residue chain is MAKYEILYIIRPNIEEEAKNALVARFDAVLTDNGATIVESKDWEKRRLAYEIQDFREGLYHVINVETEDAHALNEFDRLSKINNDILRHMIVKLDA.

This sequence belongs to the bacterial ribosomal protein bS6 family.

Its function is as follows. Binds together with bS18 to 16S ribosomal RNA. The sequence is that of Small ribosomal subunit protein bS6 from Streptococcus mutans serotype c (strain ATCC 700610 / UA159).